The following is a 122-amino-acid chain: Large ribosomal subunit protein uL14c (122 aa).

This sequence belongs to the universal ribosomal protein uL14 family. As to quaternary structure, part of the 50S ribosomal subunit.

It localises to the plastid. It is found in the chloroplast. In terms of biological role, binds to 23S rRNA. The polypeptide is Large ribosomal subunit protein uL14c (Chara vulgaris (Common stonewort)).